The sequence spans 706 residues: Protein kinase C theta type (706 aa).

Residues 1 to 107 (MSPFLRIGLS…KNNGKTEIWL (107 aa)) form the C2 domain. A Phosphotyrosine; by LCK modification is found at Tyr90. The Phorbol-ester/DAG-type 1 zinc-finger motif lies at 159–209 (CHEFTATFFPQPTFCSVCHEFVWGLNKQGYQCRQCNAAIHKKCIDKVIAKC). Position 219 is a phosphothreonine; by autocatalysis (Thr219). A Phorbol-ester/DAG-type 2 zinc finger spans residues 231–281 (PHRFKVYNYKSPTFCEHCGTLLWGLARQGLKCDACGMNVHHRCQTKVANLC). Ser348 is subject to Phosphoserine. Positions 380–634 (FILHKMLGKG…RGDIRQHPLF (255 aa)) constitute a Protein kinase domain. Residues 386 to 394 (LGKGSFGKV) and Lys409 each bind ATP. The active-site Proton acceptor is the Asp504. Position 538 is a phosphothreonine; by PDPK1 (Thr538). The AGC-kinase C-terminal domain occupies 635–706 (REINWEELER…MNPGMERLIS (72 aa)). A phosphoserine mark is found at Ser676, Ser685, and Ser695.

This sequence belongs to the protein kinase superfamily. AGC Ser/Thr protein kinase family. PKC subfamily. As to quaternary structure, part of a lipid raft complex composed at least of BCL10, CARD11, MALT1 and IKBKB. Interacts with GLRX3 (via N-terminus). Interacts with ECT2. Interacts with CCDC88A/GIV; the interaction leads to phosphorylation of CCDC88A and inhibition of its guanine nucleotide exchange factor activity. Interacts with PRKCH upstream open reading frame 2; the interaction leads to inhibition of kinase activity. Interacts with CD28. The cofactor is Mg(2+). In terms of processing, autophosphorylation at Thr-219 is required for targeting to the TCR and cellular function of PRKCQ upon antigen receptor ligation. Following TCR stimulation, phosphorylated at Tyr-90 and Ser-685. As to expression, expressed in skeletal muscle, T-cells, megakaryoblastic cells and platelets.

It localises to the cytoplasm. The protein localises to the cell membrane. The catalysed reaction is L-seryl-[protein] + ATP = O-phospho-L-seryl-[protein] + ADP + H(+). It catalyses the reaction L-threonyl-[protein] + ATP = O-phospho-L-threonyl-[protein] + ADP + H(+). With respect to regulation, novel PKCs (PRKCD, PRKCE, PRKCH and PRKCQ) are calcium-insensitive, but activated by diacylglycerol (DAG) and phosphatidylserine. Three specific sites; Thr-538 (activation loop of the kinase domain), Ser-676 (turn motif) and Ser-695 (hydrophobic region), need to be phosphorylated for its full activation. Inhibited by PRKCH upstream open reading frame 2. Its function is as follows. Calcium-independent, phospholipid- and diacylglycerol (DAG)-dependent serine/threonine-protein kinase that mediates non-redundant functions in T-cell receptor (TCR) signaling, including T-cells activation, proliferation, differentiation and survival, by mediating activation of multiple transcription factors such as NF-kappa-B, JUN, NFATC1 and NFATC2. In TCR-CD3/CD28-co-stimulated T-cells, is required for the activation of NF-kappa-B and JUN, which in turn are essential for IL2 production, and participates in the calcium-dependent NFATC1 and NFATC2 transactivation. Mediates the activation of the canonical NF-kappa-B pathway (NFKB1) by direct phosphorylation of CARD11 on several serine residues, inducing CARD11 association with lipid rafts and recruitment of the BCL10-MALT1 complex, which then activates IKK complex, resulting in nuclear translocation and activation of NFKB1. May also play an indirect role in activation of the non-canonical NF-kappa-B (NFKB2) pathway. In the signaling pathway leading to JUN activation, acts by phosphorylating the mediator STK39/SPAK and may not act through MAP kinases signaling. Plays a critical role in TCR/CD28-induced NFATC1 and NFATC2 transactivation by participating in the regulation of reduced inositol 1,4,5-trisphosphate generation and intracellular calcium mobilization. After costimulation of T-cells through CD28 can phosphorylate CBLB and is required for the ubiquitination and subsequent degradation of CBLB, which is a prerequisite for the activation of TCR. During T-cells differentiation, plays an important role in the development of T-helper 2 (Th2) cells following immune and inflammatory responses, and, in the development of inflammatory autoimmune diseases, is necessary for the activation of IL17-producing Th17 cells. May play a minor role in Th1 response. Upon TCR stimulation, mediates T-cell protective survival signal by phosphorylating BAD, thus protecting T-cells from BAD-induced apoptosis, and by up-regulating BCL-X(L)/BCL2L1 levels through NF-kappa-B and JUN pathways. In platelets, regulates signal transduction downstream of the ITGA2B, CD36/GP4, F2R/PAR1 and F2RL3/PAR4 receptors, playing a positive role in 'outside-in' signaling and granule secretion signal transduction. May relay signals from the activated ITGA2B receptor by regulating the uncoupling of WASP and WIPF1, thereby permitting the regulation of actin filament nucleation and branching activity of the Arp2/3 complex. May mediate inhibitory effects of free fatty acids on insulin signaling by phosphorylating IRS1, which in turn blocks IRS1 tyrosine phosphorylation and downstream activation of the PI3K/AKT pathway. Phosphorylates MSN (moesin) in the presence of phosphatidylglycerol or phosphatidylinositol. Phosphorylates PDPK1 at 'Ser-504' and 'Ser-532' and negatively regulates its ability to phosphorylate PKB/AKT1. Phosphorylates CCDC88A/GIV and inhibits its guanine nucleotide exchange factor activity. Phosphorylates and activates LRRK1, which phosphorylates RAB proteins involved in intracellular trafficking. The polypeptide is Protein kinase C theta type (PRKCQ) (Homo sapiens (Human)).